Consider the following 187-residue polypeptide: MLGSSLRIFSPRAVSRLSFSTTSVEKAEKLWENPWKHALPEKSRSLATVEEAPIDWSYVERLMPIEVVPNVPEHEKYPTPSGWTPPTEAAKTHQYYIRRRHDHLLPLYLERKRDLLNEKTLDFDYVELVTIRNVDGDIFACENDLRSYLEEHLGHSIASHVDELKGRIKIKGAPRVLIEQFFYSKGF.

Belongs to the mitochondrion-specific ribosomal protein mL49 family.

It is found in the mitochondrion. This chain is Large ribosomal subunit protein mL49 (mrpl-49), found in Caenorhabditis elegans.